The following is a 422-amino-acid chain: Enolase (422 aa).

Gln162 is a binding site for (2R)-2-phosphoglycerate. Residue Glu204 is the Proton donor of the active site. 3 residues coordinate Mg(2+): Asp241, Glu284, and Asp311. Lys336, Arg365, Ser366, and Lys387 together coordinate (2R)-2-phosphoglycerate. Residue Lys336 is the Proton acceptor of the active site.

It belongs to the enolase family. It depends on Mg(2+) as a cofactor.

Its subcellular location is the cytoplasm. The protein localises to the secreted. It is found in the cell surface. It catalyses the reaction (2R)-2-phosphoglycerate = phosphoenolpyruvate + H2O. The protein operates within carbohydrate degradation; glycolysis; pyruvate from D-glyceraldehyde 3-phosphate: step 4/5. Functionally, catalyzes the reversible conversion of 2-phosphoglycerate (2-PG) into phosphoenolpyruvate (PEP). It is essential for the degradation of carbohydrates via glycolysis. In Bartonella tribocorum (strain CIP 105476 / IBS 506), this protein is Enolase.